A 24-amino-acid chain; its full sequence is AKDVRFGADVRALMLQGVDVLADA.

This sequence belongs to the chaperonin (HSP60) family. As to quaternary structure, forms a single seven-member ring complex, in tight association with the p63 protein. Testis.

It localises to the mitochondrion. Its function is as follows. Implicated in mitochondrial protein import and macromolecular assembly. May facilitate the correct folding of imported proteins. May also prevent misfolding and promote the refolding and proper assembly of unfolded polypeptides generated under stress conditions in the mitochondrial matrix. The chain is 60 kDa chaperonin, mitochondrial from Heliothis virescens (Tobacco budworm moth).